The sequence spans 107 residues: uncharacterized protein (107 aa).

Transmembrane regions (helical) follow at residues 14-34 (YLAE…IVAW) and 68-88 (FFVF…LVPI).

It is found in the cell membrane. This is an uncharacterized protein from Haemophilus influenzae (strain ATCC 51907 / DSM 11121 / KW20 / Rd).